The following is a 141-amino-acid chain: uncharacterized protein (141 aa).

Positions 1–61 are disordered; sequence IRLLHSLTPP…PPPPPPPRRA (61 aa). Over residues 8 to 58 the composition is skewed to pro residues; the sequence is TPPPPPPPPPPPPPPPPPPPPPPPPPPPPPPPPPPPPPPPPPPPPPPPPPP. Positions 98-116 form a DNA-binding region, H-T-H motif; sequence KRLLVAYPVRHFLSAACQF.

This is an uncharacterized protein from Owenia fusiformis (Polychaete worm).